A 129-amino-acid chain; its full sequence is Glutaredoxin-like protein ECU08_1380 (129 aa).

Residues 26 to 126 enclose the Glutaredoxin domain; sequence EADYGEMVRR…PLLTQNREPV (101 aa).

It belongs to the glutaredoxin family.

It is found in the cytoplasm. Functionally, has a glutathione-disulfide oxidoreductase activity in the presence of NADPH and glutathione reductase. Reduces low molecular weight disulfides and proteins. The sequence is that of Glutaredoxin-like protein ECU08_1380 from Encephalitozoon cuniculi (strain GB-M1) (Microsporidian parasite).